A 188-amino-acid chain; its full sequence is ATP synthase subunit delta (188 aa).

The protein belongs to the ATPase delta chain family. As to quaternary structure, F-type ATPases have 2 components, F(1) - the catalytic core - and F(0) - the membrane proton channel. F(1) has five subunits: alpha(3), beta(3), gamma(1), delta(1), epsilon(1). F(0) has three main subunits: a(1), b(2) and c(10-14). The alpha and beta chains form an alternating ring which encloses part of the gamma chain. F(1) is attached to F(0) by a central stalk formed by the gamma and epsilon chains, while a peripheral stalk is formed by the delta and b chains.

It is found in the cell inner membrane. In terms of biological role, f(1)F(0) ATP synthase produces ATP from ADP in the presence of a proton or sodium gradient. F-type ATPases consist of two structural domains, F(1) containing the extramembraneous catalytic core and F(0) containing the membrane proton channel, linked together by a central stalk and a peripheral stalk. During catalysis, ATP synthesis in the catalytic domain of F(1) is coupled via a rotary mechanism of the central stalk subunits to proton translocation. This protein is part of the stalk that links CF(0) to CF(1). It either transmits conformational changes from CF(0) to CF(1) or is implicated in proton conduction. The polypeptide is ATP synthase subunit delta (Rhizobium meliloti (strain 1021) (Ensifer meliloti)).